The chain runs to 145 residues: Bacilliredoxin SAR1441 (145 aa).

The protein belongs to the bacilliredoxin family.

This chain is Bacilliredoxin SAR1441, found in Staphylococcus aureus (strain MRSA252).